A 201-amino-acid polypeptide reads, in one-letter code: Large ribosomal subunit protein uL4 (201 aa).

The interval 46–71 (QKTRAEVVGSGKKPWRQKGTGRARAG) is disordered.

The protein belongs to the universal ribosomal protein uL4 family. In terms of assembly, part of the 50S ribosomal subunit.

One of the primary rRNA binding proteins, this protein initially binds near the 5'-end of the 23S rRNA. It is important during the early stages of 50S assembly. It makes multiple contacts with different domains of the 23S rRNA in the assembled 50S subunit and ribosome. In terms of biological role, forms part of the polypeptide exit tunnel. This Shewanella piezotolerans (strain WP3 / JCM 13877) protein is Large ribosomal subunit protein uL4.